The primary structure comprises 165 residues: Lipoprotein signal peptidase (165 aa).

Transmembrane regions (helical) follow at residues Pro-68–Gly-88 and Gly-100–Ile-120. Catalysis depends on residues Asp-121 and Asp-137. Residues Phe-130–Ala-150 traverse the membrane as a helical segment.

This sequence belongs to the peptidase A8 family.

Its subcellular location is the cell inner membrane. It carries out the reaction Release of signal peptides from bacterial membrane prolipoproteins. Hydrolyzes -Xaa-Yaa-Zaa-|-(S,diacylglyceryl)Cys-, in which Xaa is hydrophobic (preferably Leu), and Yaa (Ala or Ser) and Zaa (Gly or Ala) have small, neutral side chains.. It functions in the pathway protein modification; lipoprotein biosynthesis (signal peptide cleavage). In terms of biological role, this protein specifically catalyzes the removal of signal peptides from prolipoproteins. This is Lipoprotein signal peptidase from Acaryochloris marina (strain MBIC 11017).